The primary structure comprises 454 residues: Bifunctional protein GlmU (454 aa).

Residues 1–228 (MSPLHVVILA…PFEVQGVNNR (228 aa)) are pyrophosphorylase. UDP-N-acetyl-alpha-D-glucosamine contacts are provided by residues 9-12 (LAAG), lysine 23, glutamine 74, 79-80 (GT), 101-103 (YGD), glycine 138, glutamate 153, asparagine 168, and asparagine 226. Mg(2+) is bound at residue aspartate 103. A Mg(2+)-binding site is contributed by asparagine 226. Residues 229 to 249 (LQLAELERWYQRQQAERLMTE) are linker. The interval 250 to 454 (GASLADPARI…IAGWERPKKA (205 aa)) is N-acetyltransferase. Positions 332 and 350 each coordinate UDP-N-acetyl-alpha-D-glucosamine. Histidine 362 acts as the Proton acceptor in catalysis. UDP-N-acetyl-alpha-D-glucosamine contacts are provided by tyrosine 365 and asparagine 376. Acetyl-CoA-binding positions include alanine 379, 385–386 (NY), serine 404, alanine 422, and arginine 439.

In the N-terminal section; belongs to the N-acetylglucosamine-1-phosphate uridyltransferase family. It in the C-terminal section; belongs to the transferase hexapeptide repeat family. As to quaternary structure, homotrimer. The cofactor is Mg(2+).

It localises to the cytoplasm. It catalyses the reaction alpha-D-glucosamine 1-phosphate + acetyl-CoA = N-acetyl-alpha-D-glucosamine 1-phosphate + CoA + H(+). The catalysed reaction is N-acetyl-alpha-D-glucosamine 1-phosphate + UTP + H(+) = UDP-N-acetyl-alpha-D-glucosamine + diphosphate. Its pathway is nucleotide-sugar biosynthesis; UDP-N-acetyl-alpha-D-glucosamine biosynthesis; N-acetyl-alpha-D-glucosamine 1-phosphate from alpha-D-glucosamine 6-phosphate (route II): step 2/2. It participates in nucleotide-sugar biosynthesis; UDP-N-acetyl-alpha-D-glucosamine biosynthesis; UDP-N-acetyl-alpha-D-glucosamine from N-acetyl-alpha-D-glucosamine 1-phosphate: step 1/1. The protein operates within bacterial outer membrane biogenesis; LPS lipid A biosynthesis. In terms of biological role, catalyzes the last two sequential reactions in the de novo biosynthetic pathway for UDP-N-acetylglucosamine (UDP-GlcNAc). The C-terminal domain catalyzes the transfer of acetyl group from acetyl coenzyme A to glucosamine-1-phosphate (GlcN-1-P) to produce N-acetylglucosamine-1-phosphate (GlcNAc-1-P), which is converted into UDP-GlcNAc by the transfer of uridine 5-monophosphate (from uridine 5-triphosphate), a reaction catalyzed by the N-terminal domain. The sequence is that of Bifunctional protein GlmU from Marinobacter nauticus (strain ATCC 700491 / DSM 11845 / VT8) (Marinobacter aquaeolei).